A 131-amino-acid polypeptide reads, in one-letter code: uncharacterized protein (131 aa).

The tract at residues 60-100 is disordered; sequence GRHTLSQVPNKGHEKASAVQLPEKQGTDQSRRGPTSAVTKA. Positions 91-100 are enriched in polar residues; sequence RGPTSAVTKA.

This is an uncharacterized protein from Homo sapiens (Human).